The following is a 409-amino-acid chain: MDKLLERFLNYVSLDTQSKAGVRQVPSTEGQWKLLHLLKEQLEEMGLINVTLSEKGTLMATLPANVPGNIPAIGFISHVDTSPDCSGKNVNPQIVENYRGGDIALGIGDEVLSPVMFPVLHQLLGQTLITTDGKTLLGADDKAGIAEIMTALAVLQQKNIPHGDIRVAFTPDEEVGKGAKHFDVDAFDARWAYTVDGGGVGELEFENFNAASVNIKIVGNNVHPGTAKGVMVNALSLAARIHAEVPADESPEMTEGYEGFYHLASMKGTVDRADMHYIIRDFDRKQFEARKRKMMEIAKKVGKGLHPDCYIELVIEDSYYNMREKVVEHPHIIDIAQQAMRDCDIEPELKPIRGGTDGAQLSFMGLPCPNLFTGGYNYHGKHEFVTLEGMEKAVQVIVRIAELTAQRKS.

His78 contacts Zn(2+). Asp80 is an active-site residue. Asp140 contributes to the Zn(2+) binding site. Glu173 (proton acceptor) is an active-site residue. Residues Glu174, Asp196, and His379 each contribute to the Zn(2+) site.

Belongs to the peptidase M20B family. Requires Zn(2+) as cofactor.

It localises to the cytoplasm. The catalysed reaction is Release of the N-terminal residue from a tripeptide.. Cleaves the N-terminal amino acid of tripeptides. This Escherichia coli (strain SE11) protein is Peptidase T.